Here is an 884-residue protein sequence, read N- to C-terminus: Protein P (884 aa).

The segment at 1 to 184 (MHPFSRLFRN…GKPYSWEHRQ (184 aa)) is terminal protein domain (TP). The tract at residues 185–387 (LVQHNGQQHK…YCIHHIVSSL (203 aa)) is spacer. Residues 299–345 (RNSGHTTWFSSASNSNKSRSREKAYSSNSTSKRYSPPLNYEKSDFSS) form a disordered region. The tract at residues 388–729 (DDWGPCTVTG…YEELWPVVRQ (342 aa)) is polymerase/reverse transcriptase domain (RT). The Reverse transcriptase domain occupies 398-639 (DVTIKSPRTP…NHLHFMGYVI (242 aa)). Residues Asp470, Asp590, and Asp591 each coordinate Mg(2+).

It belongs to the hepadnaviridae P protein family.

The enzyme catalyses DNA(n) + a 2'-deoxyribonucleoside 5'-triphosphate = DNA(n+1) + diphosphate. It catalyses the reaction Endonucleolytic cleavage to 5'-phosphomonoester.. Activated by host HSP70 and HSP40 in vitro to be able to bind the epsilon loop of the pgRNA. Because deletion of the RNase H region renders the protein partly chaperone-independent, the chaperones may be needed indirectly to relieve occlusion of the RNA-binding site by this domain. Inhibited by several reverse-transcriptase inhibitors: Lamivudine, Adefovir and Entecavir. Functionally, multifunctional enzyme that converts the viral RNA genome into dsDNA in viral cytoplasmic capsids. This enzyme displays a DNA polymerase activity that can copy either DNA or RNA templates, and a ribonuclease H (RNase H) activity that cleaves the RNA strand of RNA-DNA heteroduplexes in a partially processive 3'- to 5'-endonucleasic mode. Neo-synthesized pregenomic RNA (pgRNA) are encapsidated together with the P protein, and reverse-transcribed inside the nucleocapsid. Initiation of reverse-transcription occurs first by binding the epsilon loop on the pgRNA genome, and is initiated by protein priming, thereby the 5'-end of (-)DNA is covalently linked to P protein. Partial (+)DNA is synthesized from the (-)DNA template and generates the relaxed circular DNA (RC-DNA) genome. After budding and infection, the RC-DNA migrates in the nucleus, and is converted into a plasmid-like covalently closed circular DNA (cccDNA). The activity of P protein does not seem to be necessary for cccDNA generation, and is presumably released from (+)DNA by host nuclear DNA repair machinery. In Marmota monax (Woodchuck), this protein is Protein P.